A 296-amino-acid chain; its full sequence is uncharacterized protein (296 aa).

2 consecutive CBS domains span residues Gly176–Val232 and Met236–Glu292.

This is an uncharacterized protein from Methanocaldococcus jannaschii (strain ATCC 43067 / DSM 2661 / JAL-1 / JCM 10045 / NBRC 100440) (Methanococcus jannaschii).